The primary structure comprises 265 residues: Novel plant SNARE 12 (265 aa).

At 1 to 217 the chain is on the cytoplasmic side; that stretch reads MASELPMSPH…IGRQVATDKC (217 aa). Positions 32-106 form a coiled coil; it reads LDKIKDSSRQ…ALRKTYLNTL (75 aa). A Phosphoserine modification is found at Ser-74. Positions 146-208 constitute a t-SNARE coiled-coil homology domain; it reads MKRMDETDQA…KKASQLVKEI (63 aa). The chain crosses the membrane as a helical; Anchor for type IV membrane protein span at residues 218-238; the sequence is IMAFLFLIVCGVIAIIIVKIV. Residues 239-265 lie on the Vesicular side of the membrane; it reads NPNNKDIRDIPGLAPPAQSRKLLYFRE.

This sequence belongs to the novel plant SNARE family. In terms of tissue distribution, expressed in roots, stems, flower, siliques and leaves.

Its subcellular location is the membrane. Vesicle trafficking protein that functions in the secretory pathway. In Arabidopsis thaliana (Mouse-ear cress), this protein is Novel plant SNARE 12 (NPSN12).